A 311-amino-acid polypeptide reads, in one-letter code: Light-independent protochlorophyllide reductase iron-sulfur ATP-binding protein (311 aa).

ATP contacts are provided by residues 10–15 (GIGKST) and K39. S14 contacts Mg(2+). C95 and C129 together coordinate [4Fe-4S] cluster. Position 180-181 (180-181 (NR)) interacts with ATP.

Belongs to the NifH/BchL/ChlL family. Homodimer. Protochlorophyllide reductase is composed of three subunits; ChlL, ChlN and ChlB. The cofactor is [4Fe-4S] cluster.

The protein resides in the plastid. It is found in the chloroplast. The catalysed reaction is chlorophyllide a + oxidized 2[4Fe-4S]-[ferredoxin] + 2 ADP + 2 phosphate = protochlorophyllide a + reduced 2[4Fe-4S]-[ferredoxin] + 2 ATP + 2 H2O. It functions in the pathway porphyrin-containing compound metabolism; chlorophyll biosynthesis (light-independent). Component of the dark-operative protochlorophyllide reductase (DPOR) that uses Mg-ATP and reduced ferredoxin to reduce ring D of protochlorophyllide (Pchlide) to form chlorophyllide a (Chlide). This reaction is light-independent. The L component serves as a unique electron donor to the NB-component of the complex, and binds Mg-ATP. This is Light-independent protochlorophyllide reductase iron-sulfur ATP-binding protein from Oltmannsiellopsis viridis (Marine flagellate).